The following is a 672-amino-acid chain: NADPH-Fe(3+) oxidoreductase subunit beta (672 aa).

Positions 203, 207, 211, and 215 each coordinate [4Fe-4S] cluster. 254–283 (KKVAIVGAGPAGLACAYYLALEGYPCTIYE) is an FAD binding site. Residue 388–421 (GKKVVVVGGGNTAIDCVRVALREGAEESTLLYRR) participates in NADP(+) binding. Residue 552–562 (TDLEGVFAGGD) coordinates FAD.

Heterotetramer with 2 alpha subunits. Requires [4Fe-4S] cluster as cofactor. The cofactor is FAD.

It is found in the cell membrane. Probably involved in acetate metabolism and not in the reduction of Fe(3+) chelates. May serve as a major route for NADP regeneration. In Geobacter sulfurreducens (strain DL-1 / KN400), this protein is NADPH-Fe(3+) oxidoreductase subunit beta (sfrB).